Here is a 37-residue protein sequence, read N- to C-terminus: Large ribosomal subunit protein bL36 (37 aa).

This sequence belongs to the bacterial ribosomal protein bL36 family.

The chain is Large ribosomal subunit protein bL36 from Staphylococcus epidermidis (strain ATCC 35984 / DSM 28319 / BCRC 17069 / CCUG 31568 / BM 3577 / RP62A).